We begin with the raw amino-acid sequence, 353 residues long: Ferredoxin--NADP reductase (353 aa).

Positions 25, 44, 52, 57, 97, 132, 298, and 339 each coordinate FAD.

The protein belongs to the ferredoxin--NADP reductase type 2 family. As to quaternary structure, homodimer. FAD serves as cofactor.

It carries out the reaction 2 reduced [2Fe-2S]-[ferredoxin] + NADP(+) + H(+) = 2 oxidized [2Fe-2S]-[ferredoxin] + NADPH. The protein is Ferredoxin--NADP reductase of Chlorobium phaeovibrioides (strain DSM 265 / 1930) (Prosthecochloris vibrioformis (strain DSM 265)).